The sequence spans 55 residues: Large ribosomal subunit protein bL33 (55 aa).

The protein belongs to the bacterial ribosomal protein bL33 family.

The protein is Large ribosomal subunit protein bL33 of Cereibacter sphaeroides (strain ATCC 17029 / ATH 2.4.9) (Rhodobacter sphaeroides).